Reading from the N-terminus, the 316-residue chain is Ribosomal RNA small subunit methyltransferase H (316 aa).

Residues 35–37, Asp55, Phe84, Asp105, and Gln112 each bind S-adenosyl-L-methionine; that span reads AGH.

The protein belongs to the methyltransferase superfamily. RsmH family.

Its subcellular location is the cytoplasm. The catalysed reaction is cytidine(1402) in 16S rRNA + S-adenosyl-L-methionine = N(4)-methylcytidine(1402) in 16S rRNA + S-adenosyl-L-homocysteine + H(+). In terms of biological role, specifically methylates the N4 position of cytidine in position 1402 (C1402) of 16S rRNA. This chain is Ribosomal RNA small subunit methyltransferase H, found in Streptococcus uberis (strain ATCC BAA-854 / 0140J).